The chain runs to 119 residues: Bombesin (119 aa).

Positions 1–29 are cleaved as a signal peptide; it reads MSAIPLNRILPLGFLFHLLIFSFISLSSC. The propeptide occupies 30–44; that stretch reads MEFVEDPNNQGRISL. Met-58 bears the Methionine amide mark. A propeptide spanning residues 62–119 is cleaved from the precursor; sequence SLQDTDFEEMESFAKRNVENMRAALLQEQNRAESERELRHAQLVVRNILEQYLKNMQN.

It belongs to the bombesin/neuromedin-B/ranatensin family. Localized to the cutaneous granular glands in the skin and the brain.

Its subcellular location is the secreted. Stimulates smooth muscle contraction. Role in induction of hypothermia, stimulation of DNA replication and release of many gastrointestinal hormones. This chain is Bombesin, found in Bombina orientalis (Oriental fire-bellied toad).